A 186-amino-acid chain; its full sequence is Ribosome-recycling factor (186 aa).

Belongs to the RRF family.

It is found in the cytoplasm. Responsible for the release of ribosomes from messenger RNA at the termination of protein biosynthesis. May increase the efficiency of translation by recycling ribosomes from one round of translation to another. The sequence is that of Ribosome-recycling factor from Burkholderia thailandensis (strain ATCC 700388 / DSM 13276 / CCUG 48851 / CIP 106301 / E264).